Here is a 97-residue protein sequence, read N- to C-terminus: uncharacterized protein (97 aa).

This is an uncharacterized protein from Escherichia coli O157:H7.